We begin with the raw amino-acid sequence, 283 residues long: 4-hydroxy-3-methylbut-2-enyl diphosphate reductase (283 aa).

A [4Fe-4S] cluster-binding site is contributed by Cys12. (2E)-4-hydroxy-3-methylbut-2-enyl diphosphate-binding residues include His41 and His74. 2 residues coordinate dimethylallyl diphosphate: His41 and His74. Isopentenyl diphosphate is bound by residues His41 and His74. A [4Fe-4S] cluster-binding site is contributed by Cys96. His124 contributes to the (2E)-4-hydroxy-3-methylbut-2-enyl diphosphate binding site. Dimethylallyl diphosphate is bound at residue His124. His124 lines the isopentenyl diphosphate pocket. Glu126 (proton donor) is an active-site residue. Thr161 serves as a coordination point for (2E)-4-hydroxy-3-methylbut-2-enyl diphosphate. Position 189 (Cys189) interacts with [4Fe-4S] cluster. (2E)-4-hydroxy-3-methylbut-2-enyl diphosphate is bound by residues Ser217, Asn219, and Ser261. Dimethylallyl diphosphate contacts are provided by Ser217, Asn219, and Ser261. Isopentenyl diphosphate is bound by residues Ser217, Asn219, and Ser261.

It belongs to the IspH family. [4Fe-4S] cluster is required as a cofactor.

It catalyses the reaction isopentenyl diphosphate + 2 oxidized [2Fe-2S]-[ferredoxin] + H2O = (2E)-4-hydroxy-3-methylbut-2-enyl diphosphate + 2 reduced [2Fe-2S]-[ferredoxin] + 2 H(+). The catalysed reaction is dimethylallyl diphosphate + 2 oxidized [2Fe-2S]-[ferredoxin] + H2O = (2E)-4-hydroxy-3-methylbut-2-enyl diphosphate + 2 reduced [2Fe-2S]-[ferredoxin] + 2 H(+). Its pathway is isoprenoid biosynthesis; dimethylallyl diphosphate biosynthesis; dimethylallyl diphosphate from (2E)-4-hydroxy-3-methylbutenyl diphosphate: step 1/1. The protein operates within isoprenoid biosynthesis; isopentenyl diphosphate biosynthesis via DXP pathway; isopentenyl diphosphate from 1-deoxy-D-xylulose 5-phosphate: step 6/6. Its function is as follows. Catalyzes the conversion of 1-hydroxy-2-methyl-2-(E)-butenyl 4-diphosphate (HMBPP) into a mixture of isopentenyl diphosphate (IPP) and dimethylallyl diphosphate (DMAPP). Acts in the terminal step of the DOXP/MEP pathway for isoprenoid precursor biosynthesis. In Anaeromyxobacter sp. (strain Fw109-5), this protein is 4-hydroxy-3-methylbut-2-enyl diphosphate reductase.